We begin with the raw amino-acid sequence, 282 residues long: tRNA (guanine-N(7)-)-methyltransferase (282 aa).

A disordered region spans residues Met1–Asp31. Positions Ala16–Asp31 are enriched in basic and acidic residues. S-adenosyl-L-methionine is bound by residues Gly99, Glu122–Ile123, Asn157–Ala158, and Cys177. Asp180 is an active-site residue. Thr255–Glu257 serves as a coordination point for S-adenosyl-L-methionine.

The protein belongs to the class I-like SAM-binding methyltransferase superfamily. TrmB family. Forms a complex with TRM82.

It localises to the nucleus. It catalyses the reaction guanosine(46) in tRNA + S-adenosyl-L-methionine = N(7)-methylguanosine(46) in tRNA + S-adenosyl-L-homocysteine. It functions in the pathway tRNA modification; N(7)-methylguanine-tRNA biosynthesis. Its function is as follows. Catalyzes the formation of N(7)-methylguanine at position 46 (m7G46) in tRNA. In Eremothecium gossypii (strain ATCC 10895 / CBS 109.51 / FGSC 9923 / NRRL Y-1056) (Yeast), this protein is tRNA (guanine-N(7)-)-methyltransferase.